The primary structure comprises 225 residues: C-reactive protein (225 aa).

The signal sequence occupies residues 1 to 19 (MAKLLLYFLLLTSLSDVFG). The Pentraxin (PTX) domain occupies 24–225 (SKKTFVFPKE…EVFIKPQLWP (202 aa)). The cysteines at positions 55 and 116 are disulfide-linked. 4 residues coordinate Ca(2+): asparagine 80, glutamine 158, aspartate 159, and glutamine 169.

Belongs to the pentraxin family. Homopentamer. Pentraxin (or pentaxin) have a discoid arrangement of 5 non-covalently bound subunits. Interacts with FCN1; may regulate monocyte activation by FCN1. Ca(2+) is required as a cofactor. As to expression, found in plasma.

Its subcellular location is the secreted. Displays several functions associated with host defense: it promotes agglutination, bacterial capsular swelling, phagocytosis and complement fixation through its calcium-dependent binding to phosphorylcholine. Can interact with DNA and histones and may scavenge nuclear material released from damaged circulating cells. The sequence is that of C-reactive protein (CRP) from Cavia porcellus (Guinea pig).